The following is a 241-amino-acid chain: Demethylmenaquinone methyltransferase (241 aa).

Thr-73 and Asp-92 together coordinate S-adenosyl-L-methionine.

It belongs to the class I-like SAM-binding methyltransferase superfamily. MenG/UbiE family.

The enzyme catalyses a 2-demethylmenaquinol + S-adenosyl-L-methionine = a menaquinol + S-adenosyl-L-homocysteine + H(+). The protein operates within quinol/quinone metabolism; menaquinone biosynthesis; menaquinol from 1,4-dihydroxy-2-naphthoate: step 2/2. Methyltransferase required for the conversion of demethylmenaquinol (DMKH2) to menaquinol (MKH2). This is Demethylmenaquinone methyltransferase from Chlorobaculum parvum (strain DSM 263 / NCIMB 8327) (Chlorobium vibrioforme subsp. thiosulfatophilum).